A 296-amino-acid chain; its full sequence is 6-hydroxypseudooxynicotine dehydrogenase complex subunit alpha (296 aa).

One can recognise an FAD-binding PCMH-type domain in the interval Met-1–His-177. FAD is bound by residues Ile-30–Leu-37, Thr-111–Ser-115, and Glu-124.

Heterohexamer of 2 alpha (kdhA), 2 beta (kdhB) and 2 gamma (kdhC) subunit. Dimer of heterotrimers. FAD serves as cofactor.

It catalyses the reaction 6-hydroxypseudooxynicotine + A + H2O = 2,6-dihydroxypseudooxynicotine + AH2. Its pathway is alkaloid degradation; nicotine degradation. In terms of biological role, molybdo-flavoprotein enzyme complex involved in nicotine degradation. The subunit gamma (large subunit) contains the substrate-binding sites, the subunit alpha (medium subunit) binds FAD and the subunit beta (small subunit) has a 2Fe-2S ferredoxin-type domain which binds 2 2Fe-2S clusters. The polypeptide is 6-hydroxypseudooxynicotine dehydrogenase complex subunit alpha (kdhA) (Paenarthrobacter nicotinovorans (Arthrobacter nicotinovorans)).